The sequence spans 340 residues: Phosphate acyltransferase (340 aa).

It belongs to the PlsX family. In terms of assembly, homodimer. Probably interacts with PlsY.

Its subcellular location is the cytoplasm. The enzyme catalyses a fatty acyl-[ACP] + phosphate = an acyl phosphate + holo-[ACP]. It participates in lipid metabolism; phospholipid metabolism. Functionally, catalyzes the reversible formation of acyl-phosphate (acyl-PO(4)) from acyl-[acyl-carrier-protein] (acyl-ACP). This enzyme utilizes acyl-ACP as fatty acyl donor, but not acyl-CoA. The polypeptide is Phosphate acyltransferase (Nitrosococcus oceani (strain ATCC 19707 / BCRC 17464 / JCM 30415 / NCIMB 11848 / C-107)).